The sequence spans 239 residues: Fatty acid metabolism regulator protein (239 aa).

Residues 6 to 74 (QSPAGFAEEY…HGKPTKVNNF (69 aa)) enclose the HTH gntR-type domain. The segment at residues 34–53 (ERELSELIGVTRTTLREVLQ) is a DNA-binding region (H-T-H motif).

As to quaternary structure, homodimer.

The protein resides in the cytoplasm. Functionally, multifunctional regulator of fatty acid metabolism. Represses transcription of at least eight genes required for fatty acid transport and beta-oxidation including fadA, fadB, fadD, fadL and fadE. Activates transcription of at least three genes required for unsaturated fatty acid biosynthesis: fabA, fabB and iclR, the gene encoding the transcriptional regulator of the aceBAK operon encoding the glyoxylate shunt enzymes. Binding of FadR is specifically inhibited by long chain fatty acyl-CoA compounds. This chain is Fatty acid metabolism regulator protein, found in Salmonella typhimurium (strain LT2 / SGSC1412 / ATCC 700720).